The primary structure comprises 516 residues: L-amino-acid oxidase (516 aa).

Positions Met-1–Cys-18 are cleaved as a signal peptide. Cysteines 28 and 189 form a disulfide. Residues Met-61–Ala-62, Glu-81–Ala-82, Arg-89, and Gly-103–Arg-106 each bind FAD. Substrate is bound by residues Arg-106 and His-239. Position 279 (Val-279) interacts with FAD. A disulfide bond links Cys-349 and Cys-430. The N-linked (GlcNAc...) asparagine glycan is linked to Asn-379. Residue Tyr-390 coordinates substrate. FAD-binding positions include Glu-475 and Gly-482 to Thr-487. Gly-482–Trp-483 serves as a coordination point for substrate.

This sequence belongs to the flavin monoamine oxidase family. FIG1 subfamily. As to quaternary structure, homodimer; non-covalently linked. FAD serves as cofactor. Expressed by the venom gland.

It is found in the secreted. The catalysed reaction is an L-alpha-amino acid + O2 + H2O = a 2-oxocarboxylate + H2O2 + NH4(+). Catalyzes an oxidative deamination of predominantly hydrophobic and aromatic L-amino acids, thus producing hydrogen peroxide that may contribute to the diverse toxic effects of this enzyme. Exhibits diverse biological activities, such as hemolysis, edema, hemorrhage, apoptosis, antibacterial and antiparasitic activities, as well as regulation of platelet aggregation. Effects of snake L-amino oxidases on platelets are controversial, since they either induce aggregation or inhibit agonist-induced aggregation. These different effects are probably due to different experimental conditions. The sequence is that of L-amino-acid oxidase from Crotalus adamanteus (Eastern diamondback rattlesnake).